The sequence spans 332 residues: T-cell surface glycoprotein CD1c3 (332 aa).

The signal sequence occupies residues 1–17; sequence MLFLQFLFLDVVLGGSI. Residues 18 to 300 are Extracellular-facing; it reads TKNVVQENIS…IILYWGHGLS (283 aa). N-linked (GlcNAc...) asparagine glycosylation is found at asparagine 25, asparagine 38, asparagine 75, and asparagine 146. Intrachain disulfides connect cysteine 120–cysteine 184 and cysteine 224–cysteine 279. Positions 205 to 292 constitute an Ig-like domain; it reads PEVWLSSSPN…HSSLRDQDII (88 aa). Residues 301–321 form a helical membrane-spanning segment; sequence VILITFAVIVPLVLLIILVLL. Topologically, residues 322–332 are cytoplasmic; the sequence is CKKCCTYQGIP.

Heterodimer with B2M (beta-2-microglobulin).

Its subcellular location is the cell membrane. The protein resides in the endosome membrane. Antigen-presenting protein that binds self and non-self lipid and glycolipid antigens and presents them to T-cell receptors on natural killer T-cells. This chain is T-cell surface glycoprotein CD1c3 (CD1C3), found in Cavia porcellus (Guinea pig).